Reading from the N-terminus, the 146-residue chain is Large ribosomal subunit protein uL15 (146 aa).

Residues 1-54 (MKLHELKPAAGSKKAPKRIGRGTGSGLGRNAGKGEKGQNARSGGGVRPGFEGGQ) are disordered. Gly residues-rich tracts occupy residues 21 to 31 (RGTGSGLGRNA) and 42 to 52 (SGGGVRPGFEG).

Belongs to the universal ribosomal protein uL15 family. Part of the 50S ribosomal subunit.

Binds to the 23S rRNA. The chain is Large ribosomal subunit protein uL15 from Clostridium beijerinckii (strain ATCC 51743 / NCIMB 8052) (Clostridium acetobutylicum).